The chain runs to 167 residues: Epithelial membrane protein 2 (167 aa).

The helical transmembrane segment at 1–21 threads the bilayer; the sequence is MLVLLAFIIAFHITSAALLFI. 3 N-linked (GlcNAc...) asparagine glycosylation sites follow: asparagine 44, asparagine 47, and asparagine 52. 3 consecutive transmembrane segments (helical) span residues 67–87, 95–115, and 143–163; these read TMIL…LQLF, FVLT…AASI, and YILA…YLIL.

It belongs to the PMP-22/EMP/MP20 family. As to quaternary structure, interacts with PTK2; regulates PTK2 activation and localization. Interacts with ITGB3; regulates the levels of the heterodimer ITGA5-ITGB3 integrin surface expression. Interacts with P2RX7 (via C-terminus). Interacts with ITGB1; the interaction may be direct or indirect and ITGB1 has a heterodimer form. In terms of tissue distribution, expressed in ciliary body epithelia, sclera, cornea, and retinal pigment epithelium (at protein level). Expressed in lung and endometrial tissue; expression is particularly abundant in secretory endometrium (at protein level). Expressed in placental villous syncytiotrophoblasts and cytotrophoblasts and on the membrane of interstitial trophoblasts (at protein level).

The protein resides in the golgi apparatus membrane. The protein localises to the cell membrane. It is found in the apical cell membrane. It localises to the membrane raft. Its subcellular location is the cytoplasm. The protein resides in the nucleus. The protein localises to the perinuclear region. Functions as a key regulator of cell membrane composition by regulating protein surface expression. Also, plays a role in regulation of processes including cell migration, cell proliferation, cell contraction and cell adhesion. Regulates transepithelial migration of neutrophils into the alveolar lumen, potentially via mediation of cell surface expression of adhesion markers and lipid raft formation. Negatively regulates caveolae formation by reducing CAV1 expression and CAV1 amount by increasing lysosomal degradation. Facilitates surface trafficking and formation of lipid rafts bearing GPI-anchor proteins. Regulates surface expression of MHC1 and ICAM1 proteins increasing susceptibility to T-cell mediated cytotoxicity. Regulates the plasma membrane expression of the integrin heterodimers ITGA6-ITGB1, ITGA5-ITGB3 and ITGA5-ITGB1 resulting in modulation of cell-matrix adhesion. Also regulates many processes through PTK2. Regulates blood vessel endothelial cell migration and angiogenesis by regulating VEGF protein expression through PTK2 activation. Regulates cell migration and cell contraction through PTK2 and SRC activation. Regulates focal adhesion density, F-actin conformation and cell adhesion capacity through interaction with PTK2. Positively regulates cell proliferation. Plays a role during cell death and cell blebbing. Promotes angiogenesis and vasculogenesis through induction of VEGFA via a HIF1A-dependent pathway. Also plays a role in embryo implantation by regulating surface trafficking of integrin heterodimer ITGA5-ITGB3. Plays a role in placental angiogenesis and uterine natural killer cell regulation at the maternal-fetal placental interface, however not required in the maternal tissues for a viable pregnancy. Involved in the early stages of embryogenic development and cardiogenesis, potentially via regulation of epithelial-mesenchymal transition timing. May play a role in glomerular filtration. The chain is Epithelial membrane protein 2 (EMP2) from Homo sapiens (Human).